A 243-amino-acid chain; its full sequence is uncharacterized protein (243 aa).

The VWFA domain occupies 26–204; that stretch reads RVGLVLDITG…ISDDELYDAL (179 aa). Positions 222-243 are disordered; it reads REQEPPAEKPKKKGFFSRLFSK. The segment covering 231-243 has biased composition (basic residues); the sequence is PKKKGFFSRLFSK.

This is an uncharacterized protein from Bacillus subtilis (strain 168).